The primary structure comprises 595 residues: Estrogen receptor (595 aa).

The segment at 1 to 184 (MTMTLHTKAS…AMESAKETRY (184 aa)) is modulating (transactivation AF-1); mediates interaction with MACROD1. The O-linked (GlcNAc) serine glycan is linked to Ser-10. Residues 35–47 (LERPLGEVYVDGS) form a required for interaction with NCOA1 region. Residues 35–174 (LERPLGEVYV…LASTGDKGSM (140 aa)) form an interaction with DDX5; self-association region. 2 positions are modified to phosphoserine; by CDK2: Ser-104 and Ser-106. Position 118 is a phosphoserine (Ser-118). Residues 149–173 (FYRPTSDNRRQSGRERLASTGDKGS) are disordered. The segment covering 154–165 (SDNRRQSGRERL) has biased composition (basic and acidic residues). At Ser-167 the chain carries Phosphoserine; by CK2. 2 consecutive NR C4-type zinc fingers follow at residues 185-205 (CAVC…CEGC) and 221-245 (CPAT…LRKC). Positions 185–250 (CAVCNDYASG…RLRKCYEVGM (66 aa)) form a DNA-binding region, nuclear receptor. A mediates interaction with DNTTIP2 region spans residues 185 to 310 (CAVCNDYASG…TKKNSPALSL (126 aa)). Residues 251 to 310 (MKGGIRKDRRGGRMLKHKRQRDEGEGRNEVGSSGDVRASNLWPSPLLIKHTKKNSPALSL) form a hinge region. Over residues 257 to 269 (KDRRGGRMLKHKR) the composition is skewed to basic residues. Residues 257-287 (KDRRGGRMLKHKRQRDEGEGRNEVGSSGDVR) are disordered. At Arg-260 the chain carries Asymmetric dimethylarginine; by PRMT1. Positions 262–595 (GRMLKHKRQR…EEAGAFPTTV (334 aa)) are interaction with AKAP13. The self-association stretch occupies residues 264 to 595 (MLKHKRQRDE…EEAGAFPTTV (332 aa)). Residues 311 to 547 (TADQMVSALL…DLLLEMLDAH (237 aa)) form the NR LBD domain. The transactivation AF-2 stretch occupies residues 311–595 (TADQMVSALL…EEAGAFPTTV (285 aa)). 17beta-estradiol-binding residues include Glu-353 and Arg-394. Cys-447 is lipidated: S-palmitoyl cysteine. His-524 provides a ligand contact to 17beta-estradiol. Tyr-537 is modified (phosphotyrosine; by Tyr-kinases). Thr-571 is a glycosylation site (O-linked (GlcNAc) threonine).

Belongs to the nuclear hormone receptor family. NR3 subfamily. As to quaternary structure, binds DNA as a homodimer. Can form a heterodimer with ESR2. Interacts with coactivator NCOA5. Interacts with PELP1, the interaction is enhanced by 17-beta-estradiol; the interaction increases ESR1 transcriptional activity. Interacts with NCOA7; the interaction is ligand-inducible. Interacts with AKAP13, CUEDC2, HEXIM1, KDM5A, MAP1S, SMARD1, and UBE1C. Interacts with MUC1; the interaction is stimulated by 7 beta-estradiol (E2) and enhances ESR1-mediated transcription. Interacts with DNTTIP2, and UIMC1. Interacts with KMT2D/MLL2. Interacts with ATAD2; the interaction is enhanced by estradiol. Interacts with KIF18A and LDB1. Interacts with RLIM (via its C-terminus). Interacts with MACROD1. Interacts with SH2D4A and PLCG. Interacts with SH2D4A; the interaction blocks binding to PLCG and inhibits estrogen-induced cell proliferation. Interacts with DYNLL1. Interacts with CCDC62; the interaction requires estradiol and appears to enhance the transcription of target genes. Interacts with NR2C1; the interaction prevents homodimerization of ESR1 and suppresses its transcriptional activity and cell growth. Interacts with DNAAF4. Interacts with PRMT2. Interacts with RBFOX2. Interacts with EP300; the interaction is estrogen-dependent and enhanced by CITED1. Interacts with CITED1; the interaction is estrogen-dependent. Interacts with FAM120B, FOXL2, PHB2 and SLC30A9. Interacts with coactivators NCOA3 and NCOA6. Interacts with STK3/MST2 only in the presence of SAV1 and vice-versa. Binds to CSNK1D. Interacts with NCOA2; NCOA2 can interact with ESR1 AF-1 and AF-2 domains simultaneously and mediate their transcriptional synergy. Interacts with DDX5. Interacts with NCOA1; the interaction seems to require a self-association of N-terminal and C-terminal regions. Interacts with ZNF366, DDX17, NFKB1, RELA, SP1 and SP3. Interacts with NRIP1. Interacts with GPER1; the interaction occurs in an estrogen-dependent manner. Interacts with CLOCK and the interaction is stimulated by estrogen. Interacts with TRIP4 (ufmylated); estrogen dependent. Interacts with LMTK3; the interaction phosphorylates ESR1 (in vitro) and protects it against proteasomal degradation. Interacts with CCAR2 (via N-terminus) in a ligand-independent manner. Interacts with ZFHX3. Interacts with SFR1 in a ligand-dependent and -independent manner. Interacts with DCAF13, LATS1 and DCAF1; regulates ESR1 ubiquitination and ubiquitin-mediated proteasomal degradation. Interacts (via DNA-binding domain) with POU4F2 (C-terminus); this interaction increases the estrogen receptor ESR1 transcriptional activity in a DNA- and ligand 17-beta-estradiol-independent manner. Interacts with ESRRB isoform 1. Interacts with UBE3A and WBP2. Interacts with GTF2B. Interacts with RBM39. In the absence of hormonal ligand, interacts with TACC1. Interacts with PI3KR1 or PI3KR2 and PTK2/FAK1. Interacts with SRC. Interacts with BAG1; the interaction is promoted in the absence of estradiol (17-beta-estradiol/E2). Interacts with and ubiquitinated by STUB1; the interaction is promoted in the absence of estradiol (17-beta-estradiol/E2). Interacts with NEDD8. Ubiquitinated; regulated by LATS1 via DCAF1 it leads to ESR1 proteasomal degradation. Deubiquitinated by OTUB1. Ubiquitinated by STUB1/CHIP; in the CA1 hippocampal region following loss of endogenous circulating estradiol (17-beta-estradiol/E2). Ubiquitinated by UBR5, leading to its degradation: UBR5 specifically recognizes and binds ligand-bound ESR1 when it is not associated with coactivators (NCOAs). In presence of NCOAs, the UBR5-degron is not accessible, preventing its ubiquitination and degradation. In terms of processing, phosphorylated by cyclin A/CDK2 and CK1. Phosphorylation probably enhances transcriptional activity. Dephosphorylation at Ser-118 by PPP5C inhibits its transactivation activity. Phosphorylated by LMTK3 (in vitro). Post-translationally, palmitoylated at Cys-447 by ZDHHC7 and ZDHHC21. Palmitoylation is required for plasma membrane targeting and for rapid intracellular signaling via ERK and AKT kinases and cAMP generation, but not for signaling mediated by the nuclear hormone receptor. Dimethylated by PRMT1 at Arg-260. The methylation may favor cytoplasmic localization. Demethylated by JMJD6 at Arg-260.

The protein localises to the nucleus. Its subcellular location is the cytoplasm. It is found in the golgi apparatus. It localises to the cell membrane. Nuclear hormone receptor. The steroid hormones and their receptors are involved in the regulation of eukaryotic gene expression and affect cellular proliferation and differentiation in target tissues. Ligand-dependent nuclear transactivation involves either direct homodimer binding to a palindromic estrogen response element (ERE) sequence or association with other DNA-binding transcription factors, such as AP-1/c-Jun, c-Fos, ATF-2, Sp1 and Sp3, to mediate ERE-independent signaling. Ligand binding induces a conformational change allowing subsequent or combinatorial association with multiprotein coactivator complexes through LXXLL motifs of their respective components. Mutual transrepression occurs between the estrogen receptor (ER) and NF-kappa-B in a cell-type specific manner. Decreases NF-kappa-B DNA-binding activity and inhibits NF-kappa-B-mediated transcription from the IL6 promoter and displace RELA/p65 and associated coregulators from the promoter. Recruited to the NF-kappa-B response element of the CCL2 and IL8 promoters and can displace CREBBP. Present with NF-kappa-B components RELA/p65 and NFKB1/p50 on ERE sequences. Can also act synergistically with NF-kappa-B to activate transcription involving respective recruitment adjacent response elements; the function involves CREBBP. Can activate the transcriptional activity of TFF1. Also mediates membrane-initiated estrogen signaling involving various kinase cascades. Essential for MTA1-mediated transcriptional regulation of BRCA1 and BCAS3. Maintains neuronal survival in response to ischemic reperfusion injury when in the presence of circulating estradiol (17-beta-estradiol/E2). In Felis catus (Cat), this protein is Estrogen receptor (ESR1).